We begin with the raw amino-acid sequence, 297 residues long: SWIRM domain-containing protein laf1 (297 aa).

Disordered stretches follow at residues 50-70 (PKCS…KPTA) and 109-173 (STPA…EFSS). The segment covering 159–173 (QHNTRFKQSSREFSS) has biased composition (polar residues). The 91-residue stretch at 207 to 297 (LRSEWKGPPL…AFHDEGFFDD (91 aa)) folds into the SWIRM domain.

In terms of assembly, component of the RPD3C(L) complex.

Its subcellular location is the nucleus. Component of the RPD3C(L) histone deacetylase complex (HDAC) responsible for the deacetylation of lysine residues on the N-terminal part of the core histones (H2A, H2B, H3 and H4). Histone deacetylation gives a tag for epigenetic repression and plays an important role in transcriptional regulation, cell cycle progression and developmental events. This Schizosaccharomyces pombe (strain 972 / ATCC 24843) (Fission yeast) protein is SWIRM domain-containing protein laf1 (laf1).